The primary structure comprises 332 residues: MSSAAVVEDALEPTLQNILDQKTLKWLFVGGKGGVGKTTTSCSLAIQLSKVRESVLLISTDPAHNLSDAFGQKFGKEATKVNGFDNLSAMEIDPNSSIQEMIEQSDSQGGAMGSMMQDLAFAIPGVDEAMGFAEIMKHVKSMEYSVIVFDTAPTGHTLRFLSFPSVLEKALAKFSTLGRSLGPMLGQFQSMLGGGGPNQEDMFAKLESMREVITEVNTQFKDPEKTTFVCVCIAEFLSLYETERLIQELTSYEIDTHAIVCNQLLYPKKDSNCQHCRVRKQMQDKYVGEMMELYADDFHIVKMPLLTEEVRGTDKLKDFSNFLVTPYVPPTE.

32-39 (KGGVGKTT) is an ATP binding site. Asp61 is a catalytic residue. ATP contacts are provided by Glu235 and Asn262. Positions 273 and 276 each coordinate Zn(2+).

This sequence belongs to the arsA ATPase family. As to quaternary structure, homodimer.

Its subcellular location is the cytoplasm. The protein resides in the endoplasmic reticulum. Its function is as follows. ATPase required for the post-translational delivery of tail-anchored (TA) proteins to the endoplasmic reticulum. Recognizes and selectively binds the transmembrane domain of TA proteins in the cytosol. This complex then targets to the endoplasmic reticulum by membrane-bound receptors, where the tail-anchored protein is released for insertion. This process is regulated by ATP binding and hydrolysis. ATP binding drives the homodimer towards the closed dimer state, facilitating recognition of newly synthesized TA membrane proteins. ATP hydrolysis is required for insertion. Subsequently, the homodimer reverts towards the open dimer state, lowering its affinity for the membrane-bound receptor, and returning it to the cytosol to initiate a new round of targeting. This chain is ATPase GET3, found in Mycosarcoma maydis (Corn smut fungus).